The chain runs to 246 residues: UPF0309 protein OB3413 (246 aa).

The region spanning 33 to 212 (MATAVMNGNS…VLKMIEIFEE (180 aa)) is the SIS domain.

The protein belongs to the UPF0309 family.

The chain is UPF0309 protein OB3413 from Oceanobacillus iheyensis (strain DSM 14371 / CIP 107618 / JCM 11309 / KCTC 3954 / HTE831).